Consider the following 210-residue polypeptide: MNVKGASDKAQLAMQAEWEEVLAPEGALAVEEASSVLKISDDERRSYAAYIDNIIQENEIDVVYGHSRGAAIASELESDVQIIGLDGAMVIANDQANFLNIRQDDSEGYGFDRTIAGPYENTVIVKGGAFHKVAVPEGYHTKKPKASQEALERAKARKHNRARHIARAIDRLTARKTDKELEEIYWRERRKKNKNEFSKALIEFIEEQLL.

The polypeptide is Viral protein 1 (Chaetoceros (Chaetoceros sp. DNA virus 7)).